Reading from the N-terminus, the 541-residue chain is MSNSPLGSGSRISHFTTESTDRGDERASFSSRAFIHTVPPSDPQRQAGRLPIKVLKMLTARGGHILHPEYLQPLPSTPVSPIELDAKKSPLALLAQTCSQIGKPDPAPSKLSAVTGSSASGDKESKSVPLKLSDIGAEDKSSFKPYSKHPDKKDQSASDKSGFRVPSAACPPFTPRTGSPGSPRTPPPPSEPKASSECTDKKEMEQCAKTAPPDGSAHGRLSTELTHSEGTAGCKSLSAAPSPTPASSSSSSSSVLGSGLVAPVSPYKPGHTVFPLPPASMSYPATLAGAYAGYPPQFLAHGVSLDPSKGSSLVGAQLSTLGCTGKSAASSPLTGASPPSVMTASLCRDPYCLSYHCASQLGAGATCAHDLKSGYPLVYPSHALHGVSPPSLPGHPLYPYGFMLPNDPLPHVCNWVSATGPCDKRFSSSEELLGHLRTHTAFPGATDKLLPGYPSSSSLAAAAMACHMHMPPTGASPGPLTLRSPHHHPLGLSSSRYHPYSKSPLPSGGAPVPMPAATGHYYSPYALYGQRLTTASALGYQ.

Residues 1–18 (MSNSPLGSGSRISHFTTE) show a composition bias toward polar residues. 2 disordered regions span residues 1-49 (MSNS…QAGR) and 97-255 (TCSQ…SSSV). A compositionally biased stretch (basic and acidic residues) spans 137 to 157 (AEDKSSFKPYSKHPDKKDQSA). Low complexity predominate over residues 236–255 (SLSAAPSPTPASSSSSSSSV). A C2H2-type zinc finger spans residues 411–439 (HVCNWVSATGPCDKRFSSSEELLGHLRTH). The interval 474-511 (GASPGPLTLRSPHHHPLGLSSSRYHPYSKSPLPSGGAP) is disordered.

The protein belongs to the Elbow/Noc family.

The protein localises to the nucleus. Functionally, may function as a transcriptional repressor. This Xenopus tropicalis (Western clawed frog) protein is Zinc finger protein 503 (znf503).